The chain runs to 262 residues: Ribosomal RNA small subunit methyltransferase A (262 aa).

S-adenosyl-L-methionine is bound by residues histidine 16, leucine 18, glycine 43, glutamate 64, aspartate 89, and asparagine 109.

It belongs to the class I-like SAM-binding methyltransferase superfamily. rRNA adenine N(6)-methyltransferase family. RsmA subfamily.

It localises to the cytoplasm. It catalyses the reaction adenosine(1518)/adenosine(1519) in 16S rRNA + 4 S-adenosyl-L-methionine = N(6)-dimethyladenosine(1518)/N(6)-dimethyladenosine(1519) in 16S rRNA + 4 S-adenosyl-L-homocysteine + 4 H(+). In terms of biological role, specifically dimethylates two adjacent adenosines (A1518 and A1519) in the loop of a conserved hairpin near the 3'-end of 16S rRNA in the 30S particle. May play a critical role in biogenesis of 30S subunits. The chain is Ribosomal RNA small subunit methyltransferase A from Xanthomonas euvesicatoria pv. vesicatoria (strain 85-10) (Xanthomonas campestris pv. vesicatoria).